The chain runs to 432 residues: Putative D-alanyl-D-alanine carboxypeptidase (432 aa).

The chain crosses the membrane as a helical; Signal-anchor span at residues 7–25; it reads ATVLLTFSLSAFAVEYPVL.

Belongs to the peptidase S12 family. YfeW subfamily.

It localises to the cell inner membrane. It carries out the reaction Preferential cleavage: (Ac)2-L-Lys-D-Ala-|-D-Ala. Also transpeptidation of peptidyl-alanyl moieties that are N-acyl substituents of D-alanine.. In Salmonella typhi, this protein is Putative D-alanyl-D-alanine carboxypeptidase.